The primary structure comprises 939 residues: Isoleucine--tRNA ligase (939 aa).

A 'HIGH' region motif is present at residues P57–H67. E563 provides a ligand contact to L-isoleucyl-5'-AMP. The 'KMSKS' region motif lies at K604–S608. K607 contacts ATP. Residues C903, C906, C921, and C924 each coordinate Zn(2+).

It belongs to the class-I aminoacyl-tRNA synthetase family. IleS type 1 subfamily. As to quaternary structure, monomer. It depends on Zn(2+) as a cofactor.

The protein resides in the cytoplasm. It carries out the reaction tRNA(Ile) + L-isoleucine + ATP = L-isoleucyl-tRNA(Ile) + AMP + diphosphate. Functionally, catalyzes the attachment of isoleucine to tRNA(Ile). As IleRS can inadvertently accommodate and process structurally similar amino acids such as valine, to avoid such errors it has two additional distinct tRNA(Ile)-dependent editing activities. One activity is designated as 'pretransfer' editing and involves the hydrolysis of activated Val-AMP. The other activity is designated 'posttransfer' editing and involves deacylation of mischarged Val-tRNA(Ile). The sequence is that of Isoleucine--tRNA ligase from Sulfurihydrogenibium sp. (strain YO3AOP1).